The following is a 290-amino-acid chain: Acetylglutamate kinase (290 aa).

Residues 64 to 65 (GG), R86, and N183 each bind substrate.

The protein belongs to the acetylglutamate kinase family. ArgB subfamily.

It is found in the cytoplasm. It carries out the reaction N-acetyl-L-glutamate + ATP = N-acetyl-L-glutamyl 5-phosphate + ADP. Its pathway is amino-acid biosynthesis; L-arginine biosynthesis; N(2)-acetyl-L-ornithine from L-glutamate: step 2/4. Its function is as follows. Catalyzes the ATP-dependent phosphorylation of N-acetyl-L-glutamate. In Halothermothrix orenii (strain H 168 / OCM 544 / DSM 9562), this protein is Acetylglutamate kinase.